Consider the following 332-residue polypeptide: 2,3-diketo-L-gulonate reductase (332 aa).

The active-site Proton donor is His44. NAD(+)-binding positions include 168–174 (ITMVDMS), 224–225 (WK), and 304–306 (GHE).

The protein belongs to the LDH2/MDH2 oxidoreductase family. DlgD subfamily. Homodimer.

Its subcellular location is the cytoplasm. The enzyme catalyses 3-dehydro-L-gulonate + NAD(+) = 2,3-dioxo-L-gulonate + NADH + H(+). It carries out the reaction 3-dehydro-L-gulonate + NADP(+) = 2,3-dioxo-L-gulonate + NADPH + H(+). In terms of biological role, catalyzes the reduction of 2,3-diketo-L-gulonate in the presence of NADH, to form 3-keto-L-gulonate. The chain is 2,3-diketo-L-gulonate reductase from Salmonella newport (strain SL254).